We begin with the raw amino-acid sequence, 1400 residues long: DNA-directed RNA polymerase subunit beta' (1400 aa).

Zn(2+)-binding residues include C70, C72, C85, and C88. Mg(2+) contacts are provided by D460, D462, and D464. Residues C814, C888, C895, and C898 each coordinate Zn(2+). The segment at 1367-1400 (DRQAKRAEAQEGPSAEQATDNLAALLNAGFSSDE) is disordered.

This sequence belongs to the RNA polymerase beta' chain family. As to quaternary structure, the RNAP catalytic core consists of 2 alpha, 1 beta, 1 beta' and 1 omega subunit. When a sigma factor is associated with the core the holoenzyme is formed, which can initiate transcription. Mg(2+) serves as cofactor. Zn(2+) is required as a cofactor.

The enzyme catalyses RNA(n) + a ribonucleoside 5'-triphosphate = RNA(n+1) + diphosphate. In terms of biological role, DNA-dependent RNA polymerase catalyzes the transcription of DNA into RNA using the four ribonucleoside triphosphates as substrates. The sequence is that of DNA-directed RNA polymerase subunit beta' from Vibrio campbellii (strain ATCC BAA-1116).